Consider the following 654-residue polypeptide: Beta-galactosidase-1-like protein (654 aa).

The signal sequence occupies residues 1-27; sequence MAPKKPSCLRSLLLPLSLTLLLPQADT. N-linked (GlcNAc...) asparagine glycosylation is present at asparagine 97. Glutamate 186 (proton donor) is an active-site residue. An N-linked (GlcNAc...) asparagine glycan is attached at asparagine 243. Residue glutamate 264 is the Nucleophile of the active site.

Belongs to the glycosyl hydrolase 35 family.

The protein localises to the secreted. Its function is as follows. Probable glycosyl hydrolase. This chain is Beta-galactosidase-1-like protein (GLB1L), found in Macaca fascicularis (Crab-eating macaque).